A 244-amino-acid chain; its full sequence is tRNA pseudouridine synthase B (244 aa).

D46 serves as the catalytic Nucleophile.

It belongs to the pseudouridine synthase TruB family. Type 1 subfamily.

It catalyses the reaction uridine(55) in tRNA = pseudouridine(55) in tRNA. Its function is as follows. Responsible for synthesis of pseudouridine from uracil-55 in the psi GC loop of transfer RNAs. This chain is tRNA pseudouridine synthase B, found in Bordetella parapertussis (strain 12822 / ATCC BAA-587 / NCTC 13253).